A 177-amino-acid polypeptide reads, in one-letter code: Large ribosomal subunit protein uL6 (177 aa).

This sequence belongs to the universal ribosomal protein uL6 family. As to quaternary structure, part of the 50S ribosomal subunit.

Its function is as follows. This protein binds to the 23S rRNA, and is important in its secondary structure. It is located near the subunit interface in the base of the L7/L12 stalk, and near the tRNA binding site of the peptidyltransferase center. This chain is Large ribosomal subunit protein uL6, found in Pseudomonas putida (strain W619).